Here is a 182-residue protein sequence, read N- to C-terminus: MSNQLSPKPPVNPIVMGKIGSAYGIRGWLRVFSSTEDADSIFDYQPWFIQSKSGWQLVEIEGWKYHNQDLIIKVKGADDRDAANLLTNCEIVVDSSQLPDLGVGDYYWKDLIGCQVVTVTGYELGKIIDMMETGSNDVMVIKANLKDAFGVKERLVPFLTEQVVKRVDLSAQTIEVDWDPGF.

The region spanning 103-182 is the PRC barrel domain; that stretch reads VGDYYWKDLI…TIEVDWDPGF (80 aa).

It belongs to the RimM family. As to quaternary structure, binds ribosomal protein uS19.

The protein resides in the cytoplasm. In terms of biological role, an accessory protein needed during the final step in the assembly of 30S ribosomal subunit, possibly for assembly of the head region. Essential for efficient processing of 16S rRNA. May be needed both before and after RbfA during the maturation of 16S rRNA. It has affinity for free ribosomal 30S subunits but not for 70S ribosomes. The sequence is that of Ribosome maturation factor RimM from Pectobacterium atrosepticum (strain SCRI 1043 / ATCC BAA-672) (Erwinia carotovora subsp. atroseptica).